We begin with the raw amino-acid sequence, 399 residues long: Tyrosine--tRNA ligase (399 aa).

Positions 42 to 51 (PTAPDLHLGH) match the 'HIGH' region motif. The 'KMSKS' region signature appears at 226-230 (KMSKS). Lysine 229 lines the ATP pocket. The region spanning 336–396 (MPIAAVLNKA…GRKAFARITL (61 aa)) is the S4 RNA-binding domain.

The protein belongs to the class-I aminoacyl-tRNA synthetase family. TyrS type 2 subfamily. Homodimer.

The protein localises to the cytoplasm. The enzyme catalyses tRNA(Tyr) + L-tyrosine + ATP = L-tyrosyl-tRNA(Tyr) + AMP + diphosphate + H(+). Functionally, catalyzes the attachment of tyrosine to tRNA(Tyr) in a two-step reaction: tyrosine is first activated by ATP to form Tyr-AMP and then transferred to the acceptor end of tRNA(Tyr). In Pseudomonas fluorescens (strain ATCC BAA-477 / NRRL B-23932 / Pf-5), this protein is Tyrosine--tRNA ligase.